A 219-amino-acid polypeptide reads, in one-letter code: Ribosome maturation factor RimP (219 aa).

Positions 195-219 (EGRIPGDDLGAEPEDVASTETQEKK) are disordered.

The protein belongs to the RimP family.

It is found in the cytoplasm. In terms of biological role, required for maturation of 30S ribosomal subunits. The polypeptide is Ribosome maturation factor RimP (Brucella abortus (strain S19)).